The following is a 463-amino-acid chain: MGSMYYNESRMVRKDEVTCNVIIGDDKKTVVYALRIGNGPIMQKTFEEYERFFTTEKDMIPATIFTAPKKKFLQADSKFYEKRRVWILVISQHLVDNNLRSEDVRRFFHLESPDDDENNVDLGPSERKTATANDFDYLTTIGKGSFGRVYQVRHKETKKIYAMKILSKEHIRKKNEVKHVMAERNVLINNFKHPFLVSLHFSFQNKEKLYFVLDHLNGGELFSHLQREKHFSESRSRFYAAEIACALGYLHEKNIIYRDLKPENLLLDDKGYLVLTDFGLCKEDMQGSKTTSTFCGTPEYLAPEIILKKPYDKTVDWWCLGSVLYEMIFGLPPFYSKDHNEMYDKIINQPLRLKHNISVPCSELITGLLQKDRSKRLGHRNDFRDIRDHPFFLPVDWDKLLNRELKAPFIPKVKNAMDTSNISKEFVEIQIDPSSLAPQQLAVTHRDHDFENFTFVDTNRVLV.

The Protein kinase domain maps to 135 to 392 (FDYLTTIGKG…FRDIRDHPFF (258 aa)). Residues 141–149 (IGKGSFGRV) and K164 contribute to the ATP site. The active-site Proton acceptor is the D259. The AGC-kinase C-terminal domain occupies 393 to 463 (LPVDWDKLLN…TFVDTNRVLV (71 aa)).

Belongs to the protein kinase superfamily. AGC Ser/Thr protein kinase family. As to quaternary structure, interacts with pdk-1, akt-1, akt-2 and daf-16. Part of a complex containing sgk-1, akt-1 and akt-2. Interacts with let-92 phosphatase regulatory subunit pptr-1. It depends on Mg(2+) as a cofactor. As to expression, expressed in late embryos just before hatching. At postembryonic stages, expressed in sensory and motor neurons and in the intestine. Highly expressed in the intestine and head and tail neurons.

The protein localises to the cytoplasm. It localises to the nucleus. Its subcellular location is the apical cell membrane. It catalyses the reaction L-seryl-[protein] + ATP = O-phospho-L-seryl-[protein] + ADP + H(+). The enzyme catalyses L-threonyl-[protein] + ATP = O-phospho-L-threonyl-[protein] + ADP + H(+). With respect to regulation, phosphorylated and activated by pdk-1. Acts downstream of PI3 kinase age-1 and kinase pdk-1 in the daf-2/insulin receptor-like transduction pathway. Essential role in regulating development, stress response, and longevity. Phosphorylates Forkhead-related daf-16 and the longevity-promoting skn-1 transcription factors, which inhibits their entry into the nucleus and antagonizes their function. Promotes the cytoplasmic localization of the transcription factor pqm-1. Plays a role in the intracellular trafficking of proteins such as mig-14 to the cell membrane, and this may be through positively regulating ceramide synthesis. Acts downstream of rict-1 to regulate fat storage, size, development and vitellogenesis. Downstream of age-1 and together with akt-1/2, promotes cell survival during embryonic development. Plays a role in maintaining the gonadal basement membrane through antagonizing akt-1 activity. Does not appear to play a role in immune function. This is Serine/threonine-protein kinase sgk-1 from Caenorhabditis elegans.